We begin with the raw amino-acid sequence, 519 residues long: MDYENKILQKYNLCNRCYGRIYAKLMRMGNKDRGTSIKTVIAMNFEEKLKDLIEEKNNLIDIISNSQDINENEEIDENTKNNEDTENKADDKSQSNEEKIQEIDEKINIIKENLTLLRKTGLNGIKNEYIIEELLKDDITREENESEENESNIFLTPEQKCPWCKDVFNIQNLEEIADKIVEALSEYEFDRFLIGTRLPKRIKELEKDLETTFNEKNTESLRNEFGRELGKILTKKLEKPVDKETPDIVVMVNPYNQKIYLQINPIFIKGRYRKTKRGIPQSHWDCRSCRGKGCEKCNFTGKQYPTSVEEIIAEPVMNIAKGSGEALHAAGREDIDVKMLGKGRPFVIEVKEPKVRKMDLLKIMDEINKIEGVEVSDLEYGVKNDVRFFKNEPHTKTYCALVSIVDEELENHDFENDKIVELSEKLENLRIDQRTPHRVSHRRADLVRVRNIYKAWCEPIDEKSFKLTVYCDGGLYIKELISGDEGRTKPSISEILDIPCYCKLLTVMEVHDENNPANY.

The interval 70–98 is disordered; sequence NENEEIDENTKNNEDTENKADDKSQSNEE. Basic and acidic residues predominate over residues 77 to 98; it reads ENTKNNEDTENKADDKSQSNEE. The THUMP domain occupies 144–265; it reads NESEENESNI…NQKIYLQINP (122 aa). Asp-334 (nucleophile) is an active-site residue. Substrate-binding residues include Tyr-398 and Tyr-476.

It belongs to the pseudouridine synthase Pus10 family.

It carries out the reaction uridine(54) in tRNA = pseudouridine(54) in tRNA. The catalysed reaction is uridine(55) in tRNA = pseudouridine(55) in tRNA. Responsible for synthesis of pseudouridine from uracil-54 and uracil-55 in the psi GC loop of transfer RNAs. The chain is tRNA pseudouridine synthase Pus10 from Methanococcus voltae (strain ATCC BAA-1334 / A3).